We begin with the raw amino-acid sequence, 624 residues long: MEIPGSLCKKVKLSNNAQNWGMQRATNVTYQAHHVSRNKRGQVVGTRGGFRGCTVWLTGLSGAGKTTVSMALEEYLVCHGIPCYTLDGDNIRQGLNKNLGFSPEDREENVRRIAEVAKLFADAGLVCITSFISPYTQDRNNARQIHEGASLPFFEVFVDAPLHVCEQRDVKGLYKKARAGEIKGFTGIDSEYEKPEAPELVLKTDSCDVNDCVQQVVELLQERDIVPVDASYEVKELYVPENKLHLAKTDAETLPALKINKVDMQWVQVLAEGWATPLNGFMREREYLQCLHFDCLLDGGVINLSVPIVLTATHEDKERLDGCTAFALMYEGRRVAILRNPEFFEHRKEERCARQWGTTCKNHPYIKMVMEQGDWLIGGDLQVLDRVYWNDGLDQYRLTPTELKQKFKDMNADAVFAFQLRNPVHNGHALLMQDTHKQLLERGYRRPVLLLHPLGGWTKDDDVPLMWRMKQHAAVLEEGVLNPETTVVAIFPSPMMYAGPTEVQWHCRARMVAGANFYIVGRDPAGMPHPETGKDLYEPSHGAKVLTMAPGLITLEIVPFRVAAYNKKKKRMDYYDSEHHEDFEFISGTRMRKLAREGQKPPEGFMAPKAWTVLTEYYKSLEKA.

Met1 bears the N-acetylmethionine mark. The segment at 1-225 is adenylyl-sulfate kinase; the sequence is MEIPGSLCKK…VVELLQERDI (225 aa). Lys12 carries the N6-acetyllysine modification. 62–67 provides a ligand contact to ATP; sequence GAGKTT. Residues 89 to 92, Phe101, 106 to 109, 132 to 133, Lys171, and 184 to 185 each bind adenosine 5'-phosphosulfate; these read DNIR, REEN, IS, and GF. Residues Cys207, Cys212, 419-422, 521-525, and Ala563 each bind ATP; these read QLRN and GRDPA. The segment at 234–624 is sulfate adenylyltransferase; sequence VKELYVPENK…TEYYKSLEKA (391 aa).

It in the N-terminal section; belongs to the APS kinase family. In the C-terminal section; belongs to the sulfate adenylyltransferase family. As to quaternary structure, homodimer. As to expression, expressed in testis, pancreas, kidney, thymus, prostate, ovary, small intestine, colon, leukocytes and liver. Also expressed in high endothelial venules (HEV) cells and in cartilage.

It carries out the reaction sulfate + ATP + H(+) = adenosine 5'-phosphosulfate + diphosphate. The catalysed reaction is adenosine 5'-phosphosulfate + ATP = 3'-phosphoadenylyl sulfate + ADP + H(+). It functions in the pathway sulfur metabolism; sulfate assimilation. With respect to regulation, inhibited by chlorate. The kinase activity is subject to inhibition by the substrate adenylyl sulfate. Bifunctional enzyme with both ATP sulfurylase and APS kinase activity, which mediates two steps in the sulfate activation pathway. The first step is the transfer of a sulfate group to ATP to yield adenosine 5'-phosphosulfate (APS), and the second step is the transfer of a phosphate group from ATP to APS yielding 3'-phosphoadenylylsulfate (PAPS: activated sulfate donor used by sulfotransferase). In mammals, PAPS is the sole source of sulfate; APS appears to be only an intermediate in the sulfate-activation pathway. Required for normal biosynthesis of sulfated L-selectin ligands in endothelial cells. This chain is Bifunctional 3'-phosphoadenosine 5'-phosphosulfate synthase 1 (PAPSS1), found in Homo sapiens (Human).